Here is a 142-residue protein sequence, read N- to C-terminus: Large ribosomal subunit protein uL13 (142 aa).

The protein belongs to the universal ribosomal protein uL13 family. In terms of assembly, part of the 50S ribosomal subunit.

In terms of biological role, this protein is one of the early assembly proteins of the 50S ribosomal subunit, although it is not seen to bind rRNA by itself. It is important during the early stages of 50S assembly. This is Large ribosomal subunit protein uL13 from Herminiimonas arsenicoxydans.